We begin with the raw amino-acid sequence, 193 residues long: Xanthine phosphoribosyltransferase (193 aa).

Xanthine contacts are provided by Leu-20 and Thr-27. Position 128–132 (128–132 (ANGQA)) interacts with 5-phospho-alpha-D-ribose 1-diphosphate. Lys-156 provides a ligand contact to xanthine.

It belongs to the purine/pyrimidine phosphoribosyltransferase family. Xpt subfamily. Homodimer.

Its subcellular location is the cytoplasm. It carries out the reaction XMP + diphosphate = xanthine + 5-phospho-alpha-D-ribose 1-diphosphate. The protein operates within purine metabolism; XMP biosynthesis via salvage pathway; XMP from xanthine: step 1/1. In terms of biological role, converts the preformed base xanthine, a product of nucleic acid breakdown, to xanthosine 5'-monophosphate (XMP), so it can be reused for RNA or DNA synthesis. The polypeptide is Xanthine phosphoribosyltransferase (Streptococcus pneumoniae serotype 2 (strain D39 / NCTC 7466)).